A 729-amino-acid polypeptide reads, in one-letter code: MFVEHNLIKNIKIFTLAFTLTVVLIQLSRFISPLAIIHSSYIFLAWMPLCVMLSILFIFGWRGVVPVLCGMFCTNLWNFHLSFLQTAVMLGSQTFVVLCACAILRWQLGTRWRYGLTSRYVWQRLFWLGLVTPIGIKCSMYLVGSFFDFPLKISTFFGDADAIFTVVDLLSLFTAVLIYNMLFYYLTRMIVSPHFAQILWRRDIAPSLGKEKRAFTLSWLAALSVLLLLLCTPYENDFIAGYLVPVFFIIFTLGVGKLRYPFLNLTWAVSTLCLLNYNQNFLQGVETEYSLAFILAVLISFSVCLLYMVRIYHRSEWLNRRWHLQALTDPLTLLPNFRALEQAPEQEAGKSFCCLRIDNLEFMSRHYGLMMRVHCIRSICRTLLPLMQENEKLYQLPGSELLLVLSGPETEGRLQHMVNILNSRQIHWNNTGLDMGYGAAWGRFDGNQETLQPLLGQLSWLAEQSCAHHHVLALDSREEMVSGQTTKQVLLLNTIRTALDQGDLLLYAQPIRNKEGEGYDEILARLKYDGGIMTPDKFLPLIAQFNLSARFDLQVLESLLKWLATHPCDKKGPRFSVNLMPLTLLQKNIAGRIIRLFKRYHISPQAVILEITEEQAFSNAESSMYNIEQLHKFGFRIAIDDFGTGYANYERLKRLQADIIKIDGVFVKDIVTNTLDAMIVRSITDLAKAKSLSVVAEFVETQQQQALLHKLGVQYLQGYLIGRPQPLAD.

8 helical membrane passes run 17–37 (AFTLTVVLIQLSRFISPLAII), 41–61 (YIFLAWMPLCVMLSILFIFGW), 83–103 (FLQTAVMLGSQTFVVLCACAI), 126–146 (FWLGLVTPIGIKCSMYLVGSF), 163–183 (IFTVVDLLSLFTAVLIYNMLF), 214–234 (AFTLSWLAALSVLLLLLCTPY), 238–258 (FIAGYLVPVFFIIFTLGVGKL), and 289–309 (YSLAFILAVLISFSVCLLYMV). The region spanning 348-476 (AGKSFCCLRI…AHHHVLALDS (129 aa)) is the GGDEF domain. In terms of domain architecture, EAL spans 488-729 (QVLLLNTIRT…LIGRPQPLAD (242 aa)).

It localises to the cell membrane. It carries out the reaction 3',3'-c-di-GMP + H2O = 5'-phosphoguanylyl(3'-&gt;5')guanosine + H(+). Phosphodiesterase (PDE) that catalyzes the hydrolysis of cyclic-di-GMP (c-di-GMP) to 5'-pGpG. This is Probable cyclic di-GMP phosphodiesterase PdeA from Escherichia coli (strain K12).